We begin with the raw amino-acid sequence, 139 residues long: Protein PsiE homolog (139 aa).

A run of 4 helical transmembrane segments spans residues 20–40 (IVLCTALIALAIVLIIALVKI), 60–80 (AEQAVMFFLYFGFIGLIVQYF), 85–105 (HFPLRYFIYAGITAMLRLIIV), and 111–131 (VDTILFAGAILIMVIALCLVL).

It belongs to the PsiE family.

Its subcellular location is the cell inner membrane. The sequence is that of Protein PsiE homolog from Haemophilus influenzae (strain 86-028NP).